The following is a 240-amino-acid chain: UDP-2,3-diacylglucosamine hydrolase (240 aa).

Asp8, His10, Asp41, Asn79, and His114 together coordinate Mn(2+). Substrate is bound at residue 79–80 (NR). Positions 122, 160, 164, 167, and 195 each coordinate substrate. Mn(2+) is bound by residues His195 and His197.

It belongs to the LpxH family. The cofactor is Mn(2+).

It localises to the cell inner membrane. It catalyses the reaction UDP-2-N,3-O-bis[(3R)-3-hydroxytetradecanoyl]-alpha-D-glucosamine + H2O = 2-N,3-O-bis[(3R)-3-hydroxytetradecanoyl]-alpha-D-glucosaminyl 1-phosphate + UMP + 2 H(+). It participates in glycolipid biosynthesis; lipid IV(A) biosynthesis; lipid IV(A) from (3R)-3-hydroxytetradecanoyl-[acyl-carrier-protein] and UDP-N-acetyl-alpha-D-glucosamine: step 4/6. Its function is as follows. Hydrolyzes the pyrophosphate bond of UDP-2,3-diacylglucosamine to yield 2,3-diacylglucosamine 1-phosphate (lipid X) and UMP by catalyzing the attack of water at the alpha-P atom. Involved in the biosynthesis of lipid A, a phosphorylated glycolipid that anchors the lipopolysaccharide to the outer membrane of the cell. The sequence is that of UDP-2,3-diacylglucosamine hydrolase from Escherichia fergusonii (strain ATCC 35469 / DSM 13698 / CCUG 18766 / IAM 14443 / JCM 21226 / LMG 7866 / NBRC 102419 / NCTC 12128 / CDC 0568-73).